Reading from the N-terminus, the 337-residue chain is ATP-dependent 6-phosphofructokinase (337 aa).

ATP is bound at residue G11. 21–25 lines the ADP pocket; the sequence is RAVVR. ATP contacts are provided by residues 72–73 and 102–105; these read RY and GDGS. Residue D103 participates in Mg(2+) binding. A substrate-binding site is contributed by 125 to 127; it reads TID. Catalysis depends on D127, which acts as the Proton acceptor. Residue R154 participates in ADP binding. Substrate-binding positions include R162 and 169 to 171; that span reads MGR. ADP is bound by residues 185–187 and 214–216; these read GAD and KNH. Substrate is bound by residues E223, R245, and 251–254; that span reads HILR.

The protein belongs to the phosphofructokinase type A (PFKA) family. ATP-dependent PFK group I subfamily. Prokaryotic clade 'B1' sub-subfamily. As to quaternary structure, homotetramer. Mg(2+) serves as cofactor.

The protein resides in the cytoplasm. It catalyses the reaction beta-D-fructose 6-phosphate + ATP = beta-D-fructose 1,6-bisphosphate + ADP + H(+). Its pathway is carbohydrate degradation; glycolysis; D-glyceraldehyde 3-phosphate and glycerone phosphate from D-glucose: step 3/4. With respect to regulation, allosterically activated by ADP and other diphosphonucleosides, and allosterically inhibited by phosphoenolpyruvate. Its function is as follows. Catalyzes the phosphorylation of D-fructose 6-phosphate to fructose 1,6-bisphosphate by ATP, the first committing step of glycolysis. The chain is ATP-dependent 6-phosphofructokinase from Streptococcus uberis (strain ATCC BAA-854 / 0140J).